The chain runs to 505 residues: Maturase K (505 aa).

It belongs to the intron maturase 2 family. MatK subfamily.

The protein resides in the plastid. The protein localises to the chloroplast. Usually encoded in the trnK tRNA gene intron. Probably assists in splicing its own and other chloroplast group II introns. In Nuphar variegata (Yellow pond lily), this protein is Maturase K.